The chain runs to 355 residues: U5 small nuclear ribonucleoprotein 40 kDa protein (355 aa).

WD repeat units lie at residues Gly-60–Ser-99, Gly-103–Arg-142, Glu-145–Leu-185, Gln-187–Tyr-226, Ser-230–Arg-269, Asn-280–Cys-319, and Gly-322–Pro-355.

As to quaternary structure, component of the pre-catalytic and catalytic spliceosome complexes. Component of the postcatalytic spliceosome P complex. Part of the U5 snRNP complex. Component of the U4/U6-U5 tri-snRNP complex.

The protein resides in the nucleus. In terms of biological role, required for pre-mRNA splicing as component of the activated spliceosome. Component of the U5 small nuclear ribonucleoprotein (snRNP) complex and the U4/U6-U5 tri-snRNP complex, building blocks of the spliceosome. This chain is U5 small nuclear ribonucleoprotein 40 kDa protein (snrnp40), found in Dictyostelium discoideum (Social amoeba).